The chain runs to 74 residues: Exodeoxyribonuclease 7 small subunit (74 aa).

It belongs to the XseB family. As to quaternary structure, heterooligomer composed of large and small subunits.

The protein localises to the cytoplasm. It catalyses the reaction Exonucleolytic cleavage in either 5'- to 3'- or 3'- to 5'-direction to yield nucleoside 5'-phosphates.. In terms of biological role, bidirectionally degrades single-stranded DNA into large acid-insoluble oligonucleotides, which are then degraded further into small acid-soluble oligonucleotides. This Vesicomyosocius okutanii subsp. Calyptogena okutanii (strain HA) protein is Exodeoxyribonuclease 7 small subunit.